A 164-amino-acid polypeptide reads, in one-letter code: Phosphopantetheine adenylyltransferase (164 aa).

S9 contacts substrate. ATP contacts are provided by residues 9–10 (SF) and H17. Positions 41, 74, and 88 each coordinate substrate. ATP is bound by residues 89-91 (GVR), E99, and 124-130 (NSFVASS).

The protein belongs to the bacterial CoaD family. In terms of assembly, homohexamer. It depends on Mg(2+) as a cofactor.

The protein localises to the cytoplasm. The catalysed reaction is (R)-4'-phosphopantetheine + ATP + H(+) = 3'-dephospho-CoA + diphosphate. The protein operates within cofactor biosynthesis; coenzyme A biosynthesis; CoA from (R)-pantothenate: step 4/5. Functionally, reversibly transfers an adenylyl group from ATP to 4'-phosphopantetheine, yielding dephospho-CoA (dPCoA) and pyrophosphate. The sequence is that of Phosphopantetheine adenylyltransferase from Lactobacillus helveticus (strain DPC 4571).